A 260-amino-acid polypeptide reads, in one-letter code: 3'-5' ssDNA/RNA exonuclease TatD (260 aa).

Residues Glu91, His127, and His152 each coordinate a divalent metal cation.

The protein belongs to the metallo-dependent hydrolases superfamily. TatD-type hydrolase family. TatD subfamily. Monomer. The cofactor is Mg(2+).

The protein resides in the cytoplasm. Its function is as follows. 3'-5' exonuclease that prefers single-stranded DNA and RNA. May play a role in the H(2)O(2)-induced DNA damage repair. This Citrobacter koseri (strain ATCC BAA-895 / CDC 4225-83 / SGSC4696) protein is 3'-5' ssDNA/RNA exonuclease TatD.